The sequence spans 492 residues: Glycylpeptide N-tetradecanoyltransferase (492 aa).

A compositionally biased stretch (basic and acidic residues) spans Met1–Gly22. Positions Met1 to Thr45 are disordered. Tetradecanoyl-CoA is bound by residues Tyr82–Trp85, Leu215–Ile217, and Ser223–Thr227. The active-site Proton acceptor; via carboxylate is the Leu492.

This sequence belongs to the NMT family. In terms of assembly, monomer.

Its subcellular location is the cytoplasm. It catalyses the reaction N-terminal glycyl-[protein] + tetradecanoyl-CoA = N-tetradecanoylglycyl-[protein] + CoA + H(+). Its function is as follows. Adds a myristoyl group to the N-terminal glycine residue of certain cellular proteins. In Aspergillus fumigatus (strain ATCC MYA-4609 / CBS 101355 / FGSC A1100 / Af293) (Neosartorya fumigata), this protein is Glycylpeptide N-tetradecanoyltransferase (nmt1).